Consider the following 328-residue polypeptide: GMP reductase (328 aa).

Cys-174 functions as the Thioimidate intermediate in the catalytic mechanism. An NADP(+)-binding site is contributed by Ile-203–Val-226.

Belongs to the IMPDH/GMPR family. GuaC type 2 subfamily.

It carries out the reaction IMP + NH4(+) + NADP(+) = GMP + NADPH + 2 H(+). Catalyzes the irreversible NADPH-dependent deamination of GMP to IMP. It functions in the conversion of nucleobase, nucleoside and nucleotide derivatives of G to A nucleotides, and in maintaining the intracellular balance of A and G nucleotides. This is GMP reductase from Staphylococcus saprophyticus subsp. saprophyticus (strain ATCC 15305 / DSM 20229 / NCIMB 8711 / NCTC 7292 / S-41).